A 206-amino-acid chain; its full sequence is Large ribosomal subunit protein mL62 (206 aa).

The N-terminal 29 residues, 1–29 (MAATRCLRWGLSRAGVWLLPPPARCPRRA), are a transit peptide targeting the mitochondrion. Position 90 is an N5-methylglutamine (Gln90).

The protein belongs to the prokaryotic/mitochondrial release factor family. Mitochondrion-specific ribosomal protein mL62 subfamily. In terms of assembly, component of the mitochondrial large ribosomal subunit (mt-LSU). Mature mammalian 55S mitochondrial ribosomes consist of a small (28S) and a large (39S) subunit. The 28S small subunit contains a 12S ribosomal RNA (12S mt-rRNA) and 30 different proteins. The 39S large subunit contains a 16S rRNA (16S mt-rRNA), a copy of mitochondrial valine transfer RNA (mt-tRNA(Val)), which plays an integral structural role, and 52 different proteins. In terms of processing, methylation of glutamine in the GGQ triplet by HEMK1. Down-regulated during the in vitro differentiation of HT29-D4 colon carcinoma cells.

It localises to the mitochondrion. The catalysed reaction is an N-acyl-L-alpha-aminoacyl-tRNA + H2O = an N-acyl-L-amino acid + a tRNA + H(+). Essential peptidyl-tRNA hydrolase component of the mitochondrial large ribosomal subunit. Acts as a codon-independent translation release factor that has lost all stop codon specificity and directs the termination of translation in mitochondrion, possibly in case of abortive elongation. Involved in the hydrolysis of peptidyl-tRNAs that have been prematurely terminated and thus in the recycling of stalled mitochondrial ribosomes. This Homo sapiens (Human) protein is Large ribosomal subunit protein mL62.